The primary structure comprises 239 residues: Fatty acid metabolism regulator protein (239 aa).

The HTH gntR-type domain maps to 6–74 (QSPAGFAEEY…HGKPTKVNNF (69 aa)). A DNA-binding region (H-T-H motif) is located at residues 34 to 53 (ERELSELIGVTRTTLREVLQ).

Homodimer.

It localises to the cytoplasm. In terms of biological role, multifunctional regulator of fatty acid metabolism. The protein is Fatty acid metabolism regulator protein of Shigella flexneri.